The following is a 275-amino-acid chain: NH(3)-dependent NAD(+) synthetase (275 aa).

G47–S54 contacts ATP. Residue D53 coordinates Mg(2+). Deamido-NAD(+) is bound at residue R141. T161 is an ATP binding site. E166 contributes to the Mg(2+) binding site. 2 residues coordinate deamido-NAD(+): K174 and D181. ATP contacts are provided by K190 and T212. H261 to K262 contributes to the deamido-NAD(+) binding site.

It belongs to the NAD synthetase family. As to quaternary structure, homodimer.

The catalysed reaction is deamido-NAD(+) + NH4(+) + ATP = AMP + diphosphate + NAD(+) + H(+). It participates in cofactor biosynthesis; NAD(+) biosynthesis; NAD(+) from deamido-NAD(+) (ammonia route): step 1/1. Its function is as follows. Catalyzes the ATP-dependent amidation of deamido-NAD to form NAD. Uses ammonia as a nitrogen source. The protein is NH(3)-dependent NAD(+) synthetase of Lacticaseibacillus paracasei (strain ATCC 334 / BCRC 17002 / CCUG 31169 / CIP 107868 / KCTC 3260 / NRRL B-441) (Lactobacillus paracasei).